A 599-amino-acid polypeptide reads, in one-letter code: Dachshund homolog 2 (599 aa).

Positions Arg-69 to Leu-155 are DACHbox-N. Disordered regions lie at residues Arg-166–Ser-186, Leu-237–His-280, and Arg-370–His-409. The span at Leu-237–Ser-262 shows a compositional bias: polar residues. Residues Ser-389–Gln-405 show a composition bias toward low complexity. The tract at residues Ser-453 to Leu-533 is DACHbox-C. Residues Leu-459–Asp-554 adopt a coiled-coil conformation.

It belongs to the DACH/dachshund family. Interacts with SIX6 and EYA2.

Its subcellular location is the nucleus. Transcription factor that is involved in regulation of organogenesis. Seems to be a regulator for SIX1 and SIX6. Seems to act as a corepressor of SIX6 in regulating proliferation by directly repressing cyclin-dependent kinase inhibitors, including the p27Kip1 promoter. Is recruited with SIX6 to the p27Kip1 promoter in embryonal retina. SIX6 corepression also seems to involve NCOR1, TBL1, HDAC1 and HDAC3. May be involved together with PAX3, SIX1, and EYA2 in regulation of myogenesis. In the developing somite, expression of DACH2 and PAX3 is regulated by the overlying ectoderm, and DACH2 and PAX3 positively regulate each other's expression. Probably binds to DNA via its DACHbox-N domain. The protein is Dachshund homolog 2 (DACH2) of Homo sapiens (Human).